The sequence spans 579 residues: Potassium-transporting ATPase potassium-binding subunit (579 aa).

Helical transmembrane passes span 1–21, 64–84, 135–155, 178–198, 265–285, 293–313, 398–418, 435–455, 503–523, and 549–569; these read MISN…ACVV, HYAL…YGLQ, GLTV…IGLI, IYIL…QGVV, FLEL…FGLM, WAIL…AVSA, GLYG…LMVG, MAAL…AIAV, WLGI…LAIA, and LLIG…LALG.

This sequence belongs to the KdpA family. The system is composed of three essential subunits: KdpA, KdpB and KdpC.

It localises to the cell membrane. Part of the high-affinity ATP-driven potassium transport (or Kdp) system, which catalyzes the hydrolysis of ATP coupled with the electrogenic transport of potassium into the cytoplasm. This subunit binds the extracellular potassium ions and delivers the ions to the membrane domain of KdpB through an intramembrane tunnel. This chain is Potassium-transporting ATPase potassium-binding subunit, found in Herpetosiphon aurantiacus (strain ATCC 23779 / DSM 785 / 114-95).